Consider the following 349-residue polypeptide: Acyl-CoA Delta(11) desaturase (349 aa).

A run of 2 helical transmembrane segments spans residues 41-61 and 66-86; these read FLTFSYAHLAALYGLYLCFTS and TLLFSFVLFHMSNIGITAGAH. Positions 86–91 match the Histidine box-1 motif; it reads HRLWTH. The Histidine box-2 signature appears at 123 to 127; sequence HRLHH. A helical membrane pass occupies residues 184–204; sequence AVPLIGTVCFALPTLIPVYCW. The Histidine box-3 motif lies at 263–267; sequence HNYHH. Residues 282–302 form a helical membrane-spanning segment; it reads FLNLTTLFIDFCAWFGWAYDL.

It belongs to the fatty acid desaturase type 1 family. It depends on Fe cation as a cofactor. As to expression, adult female pheromone gland. Increases by two or three orders of magnitude during the first 2 days after adult eclosion.

It is found in the endoplasmic reticulum membrane. The catalysed reaction is an 11,12-saturated fatty acyl-CoA + 2 Fe(II)-[cytochrome b5] + O2 + 2 H(+) = an (11Z)-Delta(11)-fatty acyl-CoA + 2 Fe(III)-[cytochrome b5] + 2 H2O. Catalyzes the formation of Delta(11) fatty acyl precursors in the pheromone gland. This chain is Acyl-CoA Delta(11) desaturase (D11DS), found in Trichoplusia ni (Cabbage looper).